Here is a 308-residue protein sequence, read N- to C-terminus: Methionyl-tRNA formyltransferase (308 aa).

110–113 lines the (6S)-5,6,7,8-tetrahydrofolate pocket; the sequence is SLLP.

Belongs to the Fmt family.

The catalysed reaction is L-methionyl-tRNA(fMet) + (6R)-10-formyltetrahydrofolate = N-formyl-L-methionyl-tRNA(fMet) + (6S)-5,6,7,8-tetrahydrofolate + H(+). Functionally, attaches a formyl group to the free amino group of methionyl-tRNA(fMet). The formyl group appears to play a dual role in the initiator identity of N-formylmethionyl-tRNA by promoting its recognition by IF2 and preventing the misappropriation of this tRNA by the elongation apparatus. The protein is Methionyl-tRNA formyltransferase of Neisseria meningitidis serogroup C / serotype 2a (strain ATCC 700532 / DSM 15464 / FAM18).